The sequence spans 181 residues: Translation initiation factor IF-3 (181 aa).

Belongs to the IF-3 family. In terms of assembly, monomer.

The protein resides in the cytoplasm. Its function is as follows. IF-3 binds to the 30S ribosomal subunit and shifts the equilibrium between 70S ribosomes and their 50S and 30S subunits in favor of the free subunits, thus enhancing the availability of 30S subunits on which protein synthesis initiation begins. The protein is Translation initiation factor IF-3 of Azotobacter vinelandii.